The chain runs to 369 residues: Probable dual-specificity RNA methyltransferase RlmN (369 aa).

Catalysis depends on Glu-108, which acts as the Proton acceptor. One can recognise a Radical SAM core domain in the interval 114 to 357 (YPDRATVCIS…CTVRDTRGQE (244 aa)). Cys-121 and Cys-362 are oxidised to a cystine. Residues Cys-128, Cys-132, and Cys-135 each coordinate [4Fe-4S] cluster. Residues 183-184 (GE), Ser-217, 240-242 (SLH), and Asn-319 contribute to the S-adenosyl-L-methionine site. The S-methylcysteine intermediate role is filled by Cys-362.

Belongs to the radical SAM superfamily. RlmN family. [4Fe-4S] cluster is required as a cofactor.

Its subcellular location is the cytoplasm. The catalysed reaction is adenosine(2503) in 23S rRNA + 2 reduced [2Fe-2S]-[ferredoxin] + 2 S-adenosyl-L-methionine = 2-methyladenosine(2503) in 23S rRNA + 5'-deoxyadenosine + L-methionine + 2 oxidized [2Fe-2S]-[ferredoxin] + S-adenosyl-L-homocysteine. The enzyme catalyses adenosine(37) in tRNA + 2 reduced [2Fe-2S]-[ferredoxin] + 2 S-adenosyl-L-methionine = 2-methyladenosine(37) in tRNA + 5'-deoxyadenosine + L-methionine + 2 oxidized [2Fe-2S]-[ferredoxin] + S-adenosyl-L-homocysteine. Its function is as follows. Specifically methylates position 2 of adenine 2503 in 23S rRNA and position 2 of adenine 37 in tRNAs. This chain is Probable dual-specificity RNA methyltransferase RlmN, found in Saccharopolyspora erythraea (strain ATCC 11635 / DSM 40517 / JCM 4748 / NBRC 13426 / NCIMB 8594 / NRRL 2338).